The chain runs to 468 residues: Sorting and assembly machinery component 50 homolog (468 aa).

The interval 1–24 is disordered; it reads MGTVHARSLDPLPMNGPDFGSHDD. The region spanning 44–124 is the POTRA domain; that stretch reads VVVQRVHFEG…LDVTFEVTEL (81 aa).

Belongs to the SAM50/omp85 family. Associates with the mitochondrial contact site and cristae organizing system (MICOS) complex (also known as MINOS or MitOS complex).

The protein localises to the mitochondrion outer membrane. In terms of biological role, may play a role in the maintenance of the structure of mitochondrial cristae. The protein is Sorting and assembly machinery component 50 homolog (samm50) of Xenopus tropicalis (Western clawed frog).